The primary structure comprises 463 residues: MLSRATRTAAAKSLVKSKVARNVMAASFVKRHASTSLFKQANKVESLGSIYLSGKKISVAANPFSITSNRFKSTSIEVPPMAESLTEGSLKEYTKNVGDFIKEDELLATIETDKIDIEVNSPVSGTVTKLNFKPEDTVTVGEELAQVEPGEAPAEGSGESKPEPTEQAEPSQGVAARENSSEETASKKEAAPKKEAAPKKEVTEPKKADQPKKTVSKAQEPPVASNSFTPFPRTETRVKMNRMRLRIAERLKESQNTAASLTTFNEVDMSALMEMRKLYKDEIIKKTGTKFGFMGLFSKACTLAAKDIPAVNGAIEGDQIVYRDYTDISVAVATPKGLVTPVVRNAESLSVLDIENEIVRLSHKARDGKLTLEDMTGGTFTISNGGVFGSLYGTPIINSPQTAVLGLHGVKERPVTVNGQIVSRPMMYLALTYDHRLLDGREAVTFLKTVKELIEDPRKMLLW.

A Lipoyl-binding domain is found at 73–148; sequence STSIEVPPMA…TVGEELAQVE (76 aa). Lysine 114 is modified (N6-lipoyllysine). The segment at 144–237 is disordered; the sequence is LAQVEPGEAP…FTPFPRTETR (94 aa). Residues 148–157 show a composition bias toward low complexity; the sequence is EPGEAPAEGS. Basic and acidic residues predominate over residues 184 to 212; the sequence is TASKKEAAPKKEAAPKKEVTEPKKADQPK. Repeat copies occupy residues 185–190, 191–196, and 197–202. Residues 185 to 209 are 4 X 6 AA approximate tandem repeats of A-[SP]-K-K-E-[AV]; it reads ASKKEAAPKKEAAPKKEVTEPKKAD. A 4; approximate repeat occupies 204-209; it reads EPKKAD. Threonine 340 is subject to Phosphothreonine. Catalysis depends on residues histidine 435 and aspartate 439.

It belongs to the 2-oxoacid dehydrogenase family. In terms of assembly, component of the 2-oxoglutarate dehydrogenase complex (OGDC), also called alpha-ketoglutarate dehydrogenase (KGDH) complex. The copmplex is composed of the catalytic subunits OGDH (2-oxoglutarate dehydrogenase KGD1; also called E1 subunit), DLST (dihydrolipoamide succinyltransferase KGD2; also called E2 subunit) and DLD (dihydrolipoamide dehydrogenase LPD1; also called E3 subunit), and the assembly factor KGD4. (R)-lipoate is required as a cofactor.

The protein resides in the mitochondrion. It catalyses the reaction N(6)-[(R)-dihydrolipoyl]-L-lysyl-[protein] + succinyl-CoA = N(6)-[(R)-S(8)-succinyldihydrolipoyl]-L-lysyl-[protein] + CoA. It functions in the pathway amino-acid degradation; L-lysine degradation via saccharopine pathway; glutaryl-CoA from L-lysine: step 6/6. In terms of biological role, the 2-oxoglutarate dehydrogenase complex catalyzes the overall conversion of 2-oxoglutarate to succinyl-CoA and CO(2). It contains multiple copies of three enzymatic components: 2-oxoglutarate dehydrogenase (E1), dihydrolipoamide succinyltransferase (E2) and lipoamide dehydrogenase (E3). This Saccharomyces cerevisiae (strain ATCC 204508 / S288c) (Baker's yeast) protein is Dihydrolipoyllysine-residue succinyltransferase component of 2-oxoglutarate dehydrogenase complex, mitochondrial (KGD2).